A 220-amino-acid polypeptide reads, in one-letter code: Cytidylate kinase (220 aa).

10 to 18 provides a ligand contact to ATP; the sequence is GPAGAGKST.

It belongs to the cytidylate kinase family. Type 1 subfamily.

Its subcellular location is the cytoplasm. The enzyme catalyses CMP + ATP = CDP + ADP. The catalysed reaction is dCMP + ATP = dCDP + ADP. This is Cytidylate kinase from Alkaliphilus metalliredigens (strain QYMF).